The primary structure comprises 420 residues: ATP phosphoribosyltransferase regulatory subunit (420 aa).

This sequence belongs to the class-II aminoacyl-tRNA synthetase family. HisZ subfamily. In terms of assembly, heteromultimer composed of HisG and HisZ subunits.

It localises to the cytoplasm. The protein operates within amino-acid biosynthesis; L-histidine biosynthesis; L-histidine from 5-phospho-alpha-D-ribose 1-diphosphate: step 1/9. Functionally, required for the first step of histidine biosynthesis. May allow the feedback regulation of ATP phosphoribosyltransferase activity by histidine. In Bacillus cereus (strain AH820), this protein is ATP phosphoribosyltransferase regulatory subunit.